Here is a 436-residue protein sequence, read N- to C-terminus: 3-ketoacyl-CoA thiolase (436 aa).

Catalysis depends on cysteine 99, which acts as the Acyl-thioester intermediate. Residues histidine 392 and cysteine 422 each act as proton acceptor in the active site.

The protein belongs to the thiolase-like superfamily. Thiolase family. As to quaternary structure, heterotetramer of two alpha chains (FadJ) and two beta chains (FadI).

It is found in the cytoplasm. It carries out the reaction an acyl-CoA + acetyl-CoA = a 3-oxoacyl-CoA + CoA. It functions in the pathway lipid metabolism; fatty acid beta-oxidation. In terms of biological role, catalyzes the final step of fatty acid oxidation in which acetyl-CoA is released and the CoA ester of a fatty acid two carbons shorter is formed. The sequence is that of 3-ketoacyl-CoA thiolase from Escherichia coli (strain 55989 / EAEC).